The primary structure comprises 67 residues: Medusin-H1 (67 aa).

A signal peptide spans 1–22 (MDFLKKSLFLVLFLGFFSLSIC). Positions 23 to 48 (EEEKRETEEKENEQEDDREERREEKR) are excised as a propeptide. Residues 24–46 (EEKRETEEKENEQEDDREERREE) are disordered. Positions 31–40 (EKENEQEDDR) are enriched in acidic residues. Leu66 is modified (leucine amide).

It belongs to the frog skin active peptide (FSAP) family. Medusin subfamily. In terms of tissue distribution, expressed by the skin glands.

It is found in the secreted. Functionally, antimicrobial peptide with activity against Gram-positive bacteria (S.aureus, MIC=32 mg/L) and fungi (C.albicans, MIC=128 mg/L). Shows weak hemolytic activity. The chain is Medusin-H1 from Pithecopus hypochondrialis (Orange-legged leaf frog).